Here is a 382-residue protein sequence, read N- to C-terminus: Lipid-A-disaccharide synthase (382 aa).

It belongs to the LpxB family.

The catalysed reaction is 2-N,3-O-bis[(3R)-3-hydroxytetradecanoyl]-alpha-D-glucosaminyl 1-phosphate + UDP-2-N,3-O-bis[(3R)-3-hydroxytetradecanoyl]-alpha-D-glucosamine = lipid A disaccharide (E. coli) + UDP + H(+). It carries out the reaction a lipid X + a UDP-2-N,3-O-bis[(3R)-3-hydroxyacyl]-alpha-D-glucosamine = a lipid A disaccharide + UDP + H(+). It functions in the pathway glycolipid biosynthesis; lipid IV(A) biosynthesis; lipid IV(A) from (3R)-3-hydroxytetradecanoyl-[acyl-carrier-protein] and UDP-N-acetyl-alpha-D-glucosamine: step 5/6. In terms of biological role, condensation of UDP-2,3-diacylglucosamine and 2,3-diacylglucosamine-1-phosphate to form lipid A disaccharide, a precursor of lipid A, a phosphorylated glycolipid that anchors the lipopolysaccharide to the outer membrane of the cell. The polypeptide is Lipid-A-disaccharide synthase (Citrobacter koseri (strain ATCC BAA-895 / CDC 4225-83 / SGSC4696)).